We begin with the raw amino-acid sequence, 471 residues long: GTPase Der (471 aa).

2 EngA-type G domains span residues 3-168 (PIVA…PDLS) and 178-353 (VRVA…ANHA). Residues 9-16 (GRPNVGKS), 56-60 (DTGGI), 120-123 (NKVE), 184-191 (GRPNVGKS), 231-235 (DTAGM), and 296-299 (NKWD) contribute to the GTP site. A KH-like domain is found at 354-438 (RRISTRELND…PINLYFRTRE (85 aa)).

This sequence belongs to the TRAFAC class TrmE-Era-EngA-EngB-Septin-like GTPase superfamily. EngA (Der) GTPase family. As to quaternary structure, associates with the 50S ribosomal subunit.

GTPase that plays an essential role in the late steps of ribosome biogenesis. In Symbiobacterium thermophilum (strain DSM 24528 / JCM 14929 / IAM 14863 / T), this protein is GTPase Der.